The chain runs to 129 residues: M-zodatoxin-Lt8l (129 aa).

The signal sequence occupies residues 1 to 20 (MKYFVVXXALVAAFACIAES). Positions 21–60 (KPAESEHELAEVEEENELADLEDAVWLEDLADLSDLEETR) are excised as a propeptide.

Belongs to the cationic peptide 06 (cytoinsectotoxin) family. In terms of tissue distribution, expressed by the venom gland.

Its subcellular location is the secreted. Functionally, insecticidal, cytolytic and antimicrobial peptide. Forms voltage-dependent, ion-permeable channels in membranes. At high concentration causes cell membrane lysis. This chain is M-zodatoxin-Lt8l (cit 1-12), found in Lachesana tarabaevi (Spider).